Here is a 358-residue protein sequence, read N- to C-terminus: Protein FAM187B (358 aa).

An N-terminal signal peptide occupies residues methionine 1–alanine 17. The Extracellular segment spans residues glutamine 18–leucine 322. A glycan (N-linked (GlcNAc...) asparagine) is linked at asparagine 127. The helical transmembrane segment at lysine 323–phenylalanine 343 threads the bilayer. Residues arginine 344–lysine 358 are Cytoplasmic-facing.

It belongs to the FAM187 family.

It localises to the membrane. This Mus musculus (Mouse) protein is Protein FAM187B (Fam187b).